The following is a 404-amino-acid chain: Tryptophan synthase beta chain (404 aa).

Lys-90 carries the post-translational modification N6-(pyridoxal phosphate)lysine.

It belongs to the TrpB family. Tetramer of two alpha and two beta chains. It depends on pyridoxal 5'-phosphate as a cofactor.

The enzyme catalyses (1S,2R)-1-C-(indol-3-yl)glycerol 3-phosphate + L-serine = D-glyceraldehyde 3-phosphate + L-tryptophan + H2O. It functions in the pathway amino-acid biosynthesis; L-tryptophan biosynthesis; L-tryptophan from chorismate: step 5/5. Functionally, the beta subunit is responsible for the synthesis of L-tryptophan from indole and L-serine. In Geobacillus thermodenitrificans (strain NG80-2), this protein is Tryptophan synthase beta chain.